The chain runs to 523 residues: Uridylate cyclase (523 aa).

Guanylate cyclase domains are found at residues 69–209 (VHVY…AKLA) and 318–438 (MSIF…IGIR). The a ribonucleoside 5'-triphosphate site is built by Tyr72 and Arg125. Asp323, Ile324, and Asp372 together coordinate Mn(2+).

Belongs to the adenylyl cyclase class-4/guanylyl cyclase family. Pyrimidine cyclase subfamily. As to quaternary structure, monomer. Requires Mn(2+) as cofactor.

The protein localises to the cytoplasm. It catalyses the reaction UTP = 3',5'-cyclic UMP + diphosphate. Pycsar (pyrimidine cyclase system for antiphage resistance) provides immunity against bacteriophage. The pyrimidine cyclase (PycC) synthesizes cyclic nucleotides in response to infection; these serve as specific second messenger signals. The signals activate the nearby effector, leading to bacterial cell death and abortive phage infection. A clade A Pycsar system. Functionally, the pyrimidine cyclase gene of a two-gene Pycsar system, generates cyclic UMP (cUMP) from UTP, has little to no activity on ATP, CTP or GTP. Expression of this and effector RsPycTM (AC A0A4R2UGS4) probably confers resistance to some bacteriophage. The genes are probably only expressed in response to bacteriophage infection. This Rhizobium sp. (strain PP-F2F-G36) protein is Uridylate cyclase.